The chain runs to 333 residues: Fructose-1,6-bisphosphatase class 1 (333 aa).

The Mg(2+) site is built by glutamate 92, aspartate 113, leucine 115, and aspartate 116. Residues 116 to 119, asparagine 209, tyrosine 242, and lysine 272 contribute to the substrate site; that span reads DGSS. Glutamate 278 is a Mg(2+) binding site.

This sequence belongs to the FBPase class 1 family. Homotetramer. It depends on Mg(2+) as a cofactor.

The protein resides in the cytoplasm. It carries out the reaction beta-D-fructose 1,6-bisphosphate + H2O = beta-D-fructose 6-phosphate + phosphate. The protein operates within carbohydrate biosynthesis; Calvin cycle. In Chlorobium phaeobacteroides (strain BS1), this protein is Fructose-1,6-bisphosphatase class 1.